A 352-amino-acid polypeptide reads, in one-letter code: N-acetyl-gamma-glutamyl-phosphate reductase (352 aa).

The active site involves C156.

This sequence belongs to the NAGSA dehydrogenase family. Type 1 subfamily.

The protein resides in the cytoplasm. It catalyses the reaction N-acetyl-L-glutamate 5-semialdehyde + phosphate + NADP(+) = N-acetyl-L-glutamyl 5-phosphate + NADPH + H(+). The protein operates within amino-acid biosynthesis; L-arginine biosynthesis; N(2)-acetyl-L-ornithine from L-glutamate: step 3/4. Catalyzes the NADPH-dependent reduction of N-acetyl-5-glutamyl phosphate to yield N-acetyl-L-glutamate 5-semialdehyde. The polypeptide is N-acetyl-gamma-glutamyl-phosphate reductase (Afipia carboxidovorans (strain ATCC 49405 / DSM 1227 / KCTC 32145 / OM5) (Oligotropha carboxidovorans)).